The primary structure comprises 274 residues: MGICGKLGVAALVALIVGCSPVQSQVPPLTELSPSISVHLLLGNPSGATPTKLTPDNYLMVKNQYALSYNNSKGTANWVAWQLNSSWLGNAERQDNFRPDKTLPAGWVRVTPSMYSGSGYDRGHIAPSADRTKTTEDNAATFLMTNMMPQTPDNNRNTWGNLEDYCRELVSQGKELYIVAGPNGSLGKPLKGKVTVPKSTWKIVVVLDSPGSGLEGITANTRVIAVNIPNDPELNNDWRAYKVSVDELESLTGYDFLSNVSPNIQTSIESKVDN.

The N-terminal stretch at 1–24 (MGICGKLGVAALVALIVGCSPVQS) is a signal peptide. The Proton acceptor role is filled by His-124. Mn(2+) contacts are provided by Asn-155, Asp-246, Glu-249, Asp-255, Phe-256, Gln-265, and Glu-269.

The protein belongs to the DNA/RNA non-specific endonuclease family. As to quaternary structure, monomer. It depends on Mn(2+) as a cofactor. Mg(2+) serves as cofactor. The cofactor is Ca(2+). Co(2+) is required as a cofactor. The N-terminus is blocked.

Its subcellular location is the periplasm. In terms of biological role, catalyzes the degradation of both RNA and DNA; has the potential to act as an endonuclease. The sequence is that of Nuclease (nucA) from Nostoc sp. (strain PCC 7120 / SAG 25.82 / UTEX 2576).